The sequence spans 635 residues: Threonine--tRNA ligase (635 aa).

The TGS domain occupies 1–61 (MTVVRLPDGT…EIDSDLVLIT (61 aa)). The segment at 242–533 (DHRKLGKQLD…LIEHHAGALP (292 aa)) is catalytic. Zn(2+)-binding residues include Cys-333, His-384, and His-510.

This sequence belongs to the class-II aminoacyl-tRNA synthetase family. In terms of assembly, homodimer. Zn(2+) is required as a cofactor.

It is found in the cytoplasm. It catalyses the reaction tRNA(Thr) + L-threonine + ATP = L-threonyl-tRNA(Thr) + AMP + diphosphate + H(+). Catalyzes the attachment of threonine to tRNA(Thr) in a two-step reaction: L-threonine is first activated by ATP to form Thr-AMP and then transferred to the acceptor end of tRNA(Thr). Also edits incorrectly charged L-seryl-tRNA(Thr). In Nitrosomonas eutropha (strain DSM 101675 / C91 / Nm57), this protein is Threonine--tRNA ligase.